Reading from the N-terminus, the 354-residue chain is Dual-specificity RNA methyltransferase RlmN (354 aa).

Glu-89 acts as the Proton acceptor in catalysis. The Radical SAM core domain occupies 106–339 (KEAKYTVCVS…CTIRKSKGMD (234 aa)). Cys-113 and Cys-344 are joined by a disulfide. The [4Fe-4S] cluster site is built by Cys-120, Cys-124, and Cys-127. Residues 170-171 (GE), Ser-202, 225-227 (SLH), and Asn-301 contribute to the S-adenosyl-L-methionine site. The active-site S-methylcysteine intermediate is the Cys-344.

This sequence belongs to the radical SAM superfamily. RlmN family. [4Fe-4S] cluster is required as a cofactor.

The protein localises to the cytoplasm. The catalysed reaction is adenosine(2503) in 23S rRNA + 2 reduced [2Fe-2S]-[ferredoxin] + 2 S-adenosyl-L-methionine = 2-methyladenosine(2503) in 23S rRNA + 5'-deoxyadenosine + L-methionine + 2 oxidized [2Fe-2S]-[ferredoxin] + S-adenosyl-L-homocysteine. The enzyme catalyses adenosine(37) in tRNA + 2 reduced [2Fe-2S]-[ferredoxin] + 2 S-adenosyl-L-methionine = 2-methyladenosine(37) in tRNA + 5'-deoxyadenosine + L-methionine + 2 oxidized [2Fe-2S]-[ferredoxin] + S-adenosyl-L-homocysteine. Specifically methylates position 2 of adenine 2503 in 23S rRNA and position 2 of adenine 37 in tRNAs. m2A2503 modification seems to play a crucial role in the proofreading step occurring at the peptidyl transferase center and thus would serve to optimize ribosomal fidelity. This is Dual-specificity RNA methyltransferase RlmN from Nautilia profundicola (strain ATCC BAA-1463 / DSM 18972 / AmH).